A 1441-amino-acid polypeptide reads, in one-letter code: Protein clueless (1441 aa).

Disordered stretches follow at residues 1–79 and 106–131; these read MALD…EAAT and VAAN…ELES. Positions 8-22 are enriched in polar residues; the sequence is KNSSSAATGDANTVK. Residues 54 to 63 are compositionally biased toward basic residues; it reads AKKKGKKNRN. Composition is skewed to low complexity over residues 64–79 and 106–126; these read KSPP…EAAT and VAAN…AASS. At serine 273 the chain carries Phosphoserine. The Clu domain occupies 427 to 669; the sequence is RAEDAFSSKL…RTFPPDVNFL (243 aa). Basic and acidic residues predominate over residues 726–753; the sequence is KKQDEAKEGTKEPASETEKESPPKAITE. Disordered stretches follow at residues 726–769 and 961–1009; these read KKQD…GETK and EIHK…SGGT. The segment covering 964-977 has biased composition (basic residues); that stretch reads KKRTNTKYNKHKSS. The segment covering 978-1009 has biased composition (low complexity); the sequence is KSSGSGSKQSGQTSNQNGTSTSPSSSTASGGT. TPR repeat units follow at residues 1109–1142, 1235–1268, and 1270–1303; these read AYNF…LNNV, ALID…NLKY, and GAKA…EKET.

Belongs to the CLU family.

It is found in the cytoplasm. MRNA-binding protein involved in proper cytoplasmic distribution of mitochondria. The protein is Protein clueless of Drosophila willistoni (Fruit fly).